The chain runs to 188 residues: Translation machinery-associated protein 22 (188 aa).

Positions 96-167 (VTIKRIERNK…EIEEFLLEKY (72 aa)) constitute an SUI1 domain.

Belongs to the DENR family. In terms of assembly, interacts with the 40S ribosomal subunit.

Its subcellular location is the cytoplasm. In Chaetomium globosum (strain ATCC 6205 / CBS 148.51 / DSM 1962 / NBRC 6347 / NRRL 1970) (Soil fungus), this protein is Translation machinery-associated protein 22 (TMA22).